The sequence spans 283 residues: Bifunctional protein FolD (283 aa).

NADP(+)-binding positions include 165-167 (GRS), S190, and T231.

Belongs to the tetrahydrofolate dehydrogenase/cyclohydrolase family. Homodimer.

It carries out the reaction (6R)-5,10-methylene-5,6,7,8-tetrahydrofolate + NADP(+) = (6R)-5,10-methenyltetrahydrofolate + NADPH. The enzyme catalyses (6R)-5,10-methenyltetrahydrofolate + H2O = (6R)-10-formyltetrahydrofolate + H(+). Its pathway is one-carbon metabolism; tetrahydrofolate interconversion. In terms of biological role, catalyzes the oxidation of 5,10-methylenetetrahydrofolate to 5,10-methenyltetrahydrofolate and then the hydrolysis of 5,10-methenyltetrahydrofolate to 10-formyltetrahydrofolate. This Nocardia farcinica (strain IFM 10152) protein is Bifunctional protein FolD.